Here is a 492-residue protein sequence, read N- to C-terminus: Bifunctional purine biosynthesis protein PurH (492 aa).

Positions 1-144 (MKKAILSVSN…KNFKHVTTIV (144 aa)) constitute an MGS-like domain.

Belongs to the PurH family.

It catalyses the reaction (6R)-10-formyltetrahydrofolate + 5-amino-1-(5-phospho-beta-D-ribosyl)imidazole-4-carboxamide = 5-formamido-1-(5-phospho-D-ribosyl)imidazole-4-carboxamide + (6S)-5,6,7,8-tetrahydrofolate. The enzyme catalyses IMP + H2O = 5-formamido-1-(5-phospho-D-ribosyl)imidazole-4-carboxamide. Its pathway is purine metabolism; IMP biosynthesis via de novo pathway; 5-formamido-1-(5-phospho-D-ribosyl)imidazole-4-carboxamide from 5-amino-1-(5-phospho-D-ribosyl)imidazole-4-carboxamide (10-formyl THF route): step 1/1. It functions in the pathway purine metabolism; IMP biosynthesis via de novo pathway; IMP from 5-formamido-1-(5-phospho-D-ribosyl)imidazole-4-carboxamide: step 1/1. The protein is Bifunctional purine biosynthesis protein PurH of Staphylococcus epidermidis (strain ATCC 35984 / DSM 28319 / BCRC 17069 / CCUG 31568 / BM 3577 / RP62A).